The sequence spans 395 residues: Putative carbonic anhydrase 1 (395 aa).

Residues 1-24 (MKLQGAGCVVAAVLGALFIVNVES) form the signal peptide. The Alpha-carbonic anhydrase domain maps to 42–365 (ISYDVRSTIG…LNDRPVFLVR (324 aa)). The Zn(2+) site is built by H139, H141, and H165.

Belongs to the alpha-carbonic anhydrase family. Zn(2+) is required as a cofactor. As to expression, component of the acid-insoluble and acid-soluble organic matrix of calcified layers of the shell (at protein level).

It localises to the secreted. The catalysed reaction is hydrogencarbonate + H(+) = CO2 + H2O. Its function is as follows. Reversible hydration of carbon dioxide. The polypeptide is Putative carbonic anhydrase 1 (Lottia gigantea (Giant owl limpet)).